The primary structure comprises 322 residues: tRNA-modifying protein YgfZ (322 aa).

Trp-182 lines the folate pocket.

The protein belongs to the tRNA-modifying YgfZ family.

It localises to the cytoplasm. Its function is as follows. Folate-binding protein involved in regulating the level of ATP-DnaA and in the modification of some tRNAs. It is probably a key factor in regulatory networks that act via tRNA modification, such as initiation of chromosomal replication. This is tRNA-modifying protein YgfZ from Vibrio parahaemolyticus serotype O3:K6 (strain RIMD 2210633).